We begin with the raw amino-acid sequence, 137 residues long: Holo-[acyl-carrier-protein] synthase (137 aa).

Residues aspartate 8 and glutamate 57 each contribute to the Mg(2+) site.

This sequence belongs to the P-Pant transferase superfamily. AcpS family. The cofactor is Mg(2+).

It is found in the cytoplasm. It carries out the reaction apo-[ACP] + CoA = holo-[ACP] + adenosine 3',5'-bisphosphate + H(+). In terms of biological role, transfers the 4'-phosphopantetheine moiety from coenzyme A to a Ser of acyl-carrier-protein. This is Holo-[acyl-carrier-protein] synthase from Cereibacter sphaeroides (strain ATCC 17029 / ATH 2.4.9) (Rhodobacter sphaeroides).